A 288-amino-acid polypeptide reads, in one-letter code: Tryptophan 2,3-dioxygenase (288 aa).

Residues phenylalanine 57–histidine 61, tyrosine 119, and arginine 123 each bind substrate. Histidine 246 serves as a coordination point for heme. Threonine 260 contacts substrate.

The protein belongs to the tryptophan 2,3-dioxygenase family. Homotetramer. It depends on heme as a cofactor.

The enzyme catalyses L-tryptophan + O2 = N-formyl-L-kynurenine. The protein operates within amino-acid degradation; L-tryptophan degradation via kynurenine pathway; L-kynurenine from L-tryptophan: step 1/2. In terms of biological role, heme-dependent dioxygenase that catalyzes the oxidative cleavage of the L-tryptophan (L-Trp) pyrrole ring and converts L-tryptophan to N-formyl-L-kynurenine. Catalyzes the oxidative cleavage of the indole moiety. The protein is Tryptophan 2,3-dioxygenase of Pseudomonas aeruginosa (strain UCBPP-PA14).